Here is an 89-residue protein sequence, read N- to C-terminus: MSLSTEVKAKILADFGRCENDTGSTEVQVALLTAQINHLQAHFKEHIHDHHSRRGLLRMVSSRRKLTAYLKRTDVARYTALIQKLGLRR.

This sequence belongs to the universal ribosomal protein uS15 family. In terms of assembly, part of the 30S ribosomal subunit. Forms a bridge to the 50S subunit in the 70S ribosome, contacting the 23S rRNA.

One of the primary rRNA binding proteins, it binds directly to 16S rRNA where it helps nucleate assembly of the platform of the 30S subunit by binding and bridging several RNA helices of the 16S rRNA. Functionally, forms an intersubunit bridge (bridge B4) with the 23S rRNA of the 50S subunit in the ribosome. The protein is Small ribosomal subunit protein uS15 of Shewanella baltica (strain OS223).